The chain runs to 809 residues: MSDNTKTNSRNKSVKRTKKVKKKKKFGFFKKLFTILFCLFILLSVAASGVIFAIVKTSPNLDINGTILNLDQPSQLYDDNNNPMDTVVTNQRRYVVSIKDMPKNLSNAFVSIEDERFYKHSGIDTKRILGAFYNDIKSKIHKQNSIQGASTITQQLIKNRMFLNDSLENRISFKRKIQEAYLSIKLEQSLSKSQILEAYMNTIFLGVQANGVEAASRQYFNKSAKDLNLIECAFIAGLAQSPSAYYPFSQNVAKNPNIYLDRTKLVLYKMRQNNYIDFSTYQNAINDLNNNKLAFSQQKISNKYTYEWFSIPVVNQVKQDLKSQYHYTDEEIDSLLRDGGLKIYTTMNTSMESNVQNILDNNSTLKSYSYADKNGIIQPEAAATLFDYHTGEIKAIVGGRGQQPPSSYNRADSSNYLRSVGSSIKPLTVYAPAIDTKLATEDTIVNDSPLSSDVAEKYGSNGVPYNPHNDDGGYSGPVNLKTALTKSINLVAIKLEDKLGLSTGAAYAQKFGLTLNNDDKSSIAALSLGEIRGSNTTTMAAAYGVFGNNGLYSEPRLYRKVVDKTGKVLLENNYSTRKVISPQSAYIMYDLLKGPVSAGGTGSYARFGDMPVAGKTGTASDSKNLWFCGLTPYYSAAVWVGNDQPTKLSLGSNDVAEIWGEIMKMANVNLTVKDIDAPGGVTKIGDSYYIDGTSPSNLSGDDSSSSTASKPQTPTTNTQNNTNNNVANPNSNNTTNSNTSNSTETPAQNTQQPTPTPTPSTNNTPGNTNTNTNTNNNTNTNTNTNNNNTNNSSSGNNNPPNNNTTNTNK.

At 1–34 (MSDNTKTNSRNKSVKRTKKVKKKKKFGFFKKLFT) the chain is on the cytoplasmic side. The chain crosses the membrane as a helical; Signal-anchor for type II membrane protein span at residues 35 to 55 (ILFCLFILLSVAASGVIFAIV). Residues 56-809 (KTSPNLDING…PNNNTTNTNK (754 aa)) are Extracellular-facing. Positions 74–251 (SQLYDDNNNP…PSAYYPFSQN (178 aa)) are transglycosylase. The active-site Proton donor; for transglycosylase activity is the glutamate 113. The tract at residues 381–664 (AAATLFDYHT…VAEIWGEIMK (284 aa)) is transpeptidase. The Acyl-ester intermediate; for transpeptidase activity role is filled by serine 422. Positions 694–809 (SPSNLSGDDS…PNNNTTNTNK (116 aa)) are disordered.

This sequence in the N-terminal section; belongs to the glycosyltransferase 51 family. It in the C-terminal section; belongs to the transpeptidase family.

It is found in the cell membrane. The catalysed reaction is [GlcNAc-(1-&gt;4)-Mur2Ac(oyl-L-Ala-gamma-D-Glu-L-Lys-D-Ala-D-Ala)](n)-di-trans,octa-cis-undecaprenyl diphosphate + beta-D-GlcNAc-(1-&gt;4)-Mur2Ac(oyl-L-Ala-gamma-D-Glu-L-Lys-D-Ala-D-Ala)-di-trans,octa-cis-undecaprenyl diphosphate = [GlcNAc-(1-&gt;4)-Mur2Ac(oyl-L-Ala-gamma-D-Glu-L-Lys-D-Ala-D-Ala)](n+1)-di-trans,octa-cis-undecaprenyl diphosphate + di-trans,octa-cis-undecaprenyl diphosphate + H(+). The enzyme catalyses Preferential cleavage: (Ac)2-L-Lys-D-Ala-|-D-Ala. Also transpeptidation of peptidyl-alanyl moieties that are N-acyl substituents of D-alanine.. It functions in the pathway cell wall biogenesis; peptidoglycan biosynthesis. Functionally, cell wall formation. Synthesis of cross-linked peptidoglycan from the lipid intermediates. The enzyme has a penicillin-insensitive transglycosylase N-terminal domain (formation of linear glycan strands) and a penicillin-sensitive transpeptidase C-terminal domain (cross-linking of the peptide subunits). The chain is Penicillin-binding protein 1A (pbpA) from Clostridium acetobutylicum (strain ATCC 824 / DSM 792 / JCM 1419 / IAM 19013 / LMG 5710 / NBRC 13948 / NRRL B-527 / VKM B-1787 / 2291 / W).